The sequence spans 590 residues: O-fucosyltransferase 2 (590 aa).

The span at 1 to 16 (MGQERPNDEERPESRD) shows a compositional bias: basic and acidic residues. The segment at 1–26 (MGQERPNDEERPESRDLGVYGCSPPH) is disordered. The helical; Signal-anchor for type II membrane protein transmembrane segment at 67 to 87 (TAIGVMAILGFFCLVNWFMLS) threads the bilayer. Residue Asn-125 is glycosylated (N-linked (GlcNAc...) asparagine). 365 to 367 (HLR) is a substrate binding site. 2 N-linked (GlcNAc...) asparagine glycosylation sites follow: Asn-485 and Asn-546.

It belongs to the glycosyltransferase GT106 family.

The protein resides in the membrane. It participates in glycan metabolism. In Arabidopsis thaliana (Mouse-ear cress), this protein is O-fucosyltransferase 2.